The primary structure comprises 320 residues: MQTRNAFSWLKKQITRSISVSLMIYILTRTSISSAYPIFAQQGYENPREATGRIVCANCHLANKPVEIEVPQAVLPDTVFEAVVRIPYDMQLKQVLANGKKGGLNVGAVLILPEGFELAPSDRISPEMKEKIGNLSFQSYRPNKKNILVIGPVPGKKYSEITFPILSPDPATKKDVHFLKYPIYVGGNRGRGQIYPDGSKSNNTVYNATAAGIVSKIIRKEKGGYEITITDASEGRQVVDIIPPGPELLVSEGESIKFDQPLTSNPNVGGFGQGDAEIVLQDPLRVQGLLFFLASVILAQIFLVLKKKQFEKVQLAEMNF.

A signal peptide spans 1–35 (MQTRNAFSWLKKQITRSISVSLMIYILTRTSISSA). Heme-binding residues include tyrosine 36, cysteine 56, cysteine 59, and histidine 60. A helical membrane pass occupies residues 286–305 (VQGLLFFLASVILAQIFLVL).

It belongs to the cytochrome f family. As to quaternary structure, the 4 large subunits of the cytochrome b6-f complex are cytochrome b6, subunit IV (17 kDa polypeptide, petD), cytochrome f and the Rieske protein, while the 4 small subunits are PetG, PetL, PetM and PetN. The complex functions as a dimer. The cofactor is heme.

The protein localises to the plastid. It is found in the chloroplast thylakoid membrane. Functionally, component of the cytochrome b6-f complex, which mediates electron transfer between photosystem II (PSII) and photosystem I (PSI), cyclic electron flow around PSI, and state transitions. This chain is Cytochrome f, found in Atropa belladonna (Belladonna).